The primary structure comprises 247 residues: tRNA (guanine-N(7)-)-methyltransferase (247 aa).

S-adenosyl-L-methionine-binding positions include glycine 70, 93 to 94, 128 to 129, and leucine 148; these read EI and NA. Aspartate 151 is a catalytic residue. 226 to 228 contacts S-adenosyl-L-methionine; the sequence is SEE.

This sequence belongs to the class I-like SAM-binding methyltransferase superfamily. TrmB family.

It is found in the nucleus. The catalysed reaction is guanosine(46) in tRNA + S-adenosyl-L-methionine = N(7)-methylguanosine(46) in tRNA + S-adenosyl-L-homocysteine. It functions in the pathway tRNA modification; N(7)-methylguanine-tRNA biosynthesis. In terms of biological role, catalyzes the formation of N(7)-methylguanine at position 46 (m7G46) in tRNA. In Drosophila persimilis (Fruit fly), this protein is tRNA (guanine-N(7)-)-methyltransferase.